A 278-amino-acid polypeptide reads, in one-letter code: Msm operon regulatory protein (278 aa).

One can recognise an HTH araC/xylS-type domain in the interval 176–274; that stretch reads NQVKKIIHSQ…GKSPSKFRKE (99 aa). DNA-binding regions (H-T-H motif) lie at residues 193–214 and 241–264; these read NDIAKKLNLSRSYLYKIFRKST and IAEISNSVGFSDSLAFSKAFKNYF.

Its function is as follows. Regulatory protein for the msm operon for multiple sugar metabolism. Activates the transcription of the msmEFGK, aga, dexB and gftA genes. The protein is Msm operon regulatory protein (msmR) of Streptococcus mutans serotype c (strain ATCC 700610 / UA159).